Consider the following 207-residue polypeptide: MVQLELKKDQIMKNKIIEALMYFQGDQGLSPEQVKEVFDLEKDQEGKKLLNDFMEFYNAREGGTKVFVFGEIYKIATIEPLKDYVSKLVSIVRYQKLSKAAIEVAGIVAYKQPITKSMINEIRGVASDQVVNTLLVKNLIEEVGISPTPGKPVLYGITNKFYDYFKIKSLQELPNLSEFDFVQSIDEEQEEEQSYEGFNLFSSQREN.

Belongs to the ScpB family. Homodimer. Homodimerization may be required to stabilize the binding of ScpA to the Smc head domains. Component of a cohesin-like complex composed of ScpA, ScpB and the Smc homodimer, in which ScpA and ScpB bind to the head domain of Smc. The presence of the three proteins is required for the association of the complex with DNA.

The protein resides in the cytoplasm. In terms of biological role, participates in chromosomal partition during cell division. May act via the formation of a condensin-like complex containing Smc and ScpA that pull DNA away from mid-cell into both cell halves. In Mycoplasmopsis pulmonis (strain UAB CTIP) (Mycoplasma pulmonis), this protein is Segregation and condensation protein B.